A 194-amino-acid chain; its full sequence is Peroxynitrite isomerase 1 (194 aa).

Positions 40–46 match the GXWXGXG motif; it reads GVWRGEG. Heme b-binding residues include Lys-157 and His-184.

It belongs to the nitrobindin family. Homodimer. Heme b is required as a cofactor.

The catalysed reaction is peroxynitrite = nitrate. It functions in the pathway nitrogen metabolism. In terms of biological role, heme-binding protein able to scavenge peroxynitrite and to protect free L-tyrosine against peroxynitrite-mediated nitration, by acting as a peroxynitrite isomerase that converts peroxynitrite to nitrate. Therefore, this protein likely plays a role in peroxynitrite sensing and in the detoxification of reactive nitrogen and oxygen species (RNS and ROS, respectively). Is able to bind nitric oxide (NO) in vitro, but may act as a sensor of peroxynitrite levels in vivo. The chain is Peroxynitrite isomerase 1 from Mycobacterium ulcerans (strain Agy99).